The primary structure comprises 309 residues: Large ribosomal subunit protein mL45 (309 aa).

Belongs to the mitochondrion-specific ribosomal protein mL45 family. In terms of assembly, component of the mitochondrial ribosome large subunit (39S) which comprises a 16S rRNA and about 50 distinct proteins.

Its subcellular location is the mitochondrion. Functionally, component of the mitochondrial large ribosomal subunit (mt-LSU). Within the mitochondrial ribosomes, required to direct the nascent polypeptide toward the tunnel exit and position the exit at a distance from the membrane surface. In Xenopus tropicalis (Western clawed frog), this protein is Large ribosomal subunit protein mL45 (mrpl45).